A 337-amino-acid chain; its full sequence is MNAPQAPVLVADIGGTNARFALANPTLTSAPLLNDSMREFAVIEFPSLGEAAQHYLHHIGIHTTKGVFAIAGHVDGDEARITNHPWVITRTRTATMLGFDTLHLINDFVAQAMAISVLGPQDVIQIGSAKWEQFPLSAATRNYGIIGPGTGLGVGGLMIRNGRCYPLETEGGHVSFPPSTPEEIRILEILSQQFGRVSNERLISGPGIVNIHRALSEIDGIDPGPLRPQDITMRAADGDIRATRTINLFCNIFGTITGDLVLIQGAWDGVFLTGGLVPKLLNSIQHSGFRQRFEHKGRFSAIMARIPSLAVIHPHPGLLGAAAYARDTEQVPQEIKA.

Residue 11-16 (ADIGGT) participates in ATP binding.

The protein belongs to the bacterial glucokinase family.

It localises to the cytoplasm. The enzyme catalyses D-glucose + ATP = D-glucose 6-phosphate + ADP + H(+). This is Glucokinase from Xylella fastidiosa (strain M23).